Consider the following 471-residue polypeptide: MTIEATALAYKVADISLAEWGRKEIDIAEKEMPGLMAIRKKYAGQKPLKGARVAGSLHMTIQTAVLIETLVDLGADVRWASCNIFSTQDHAAAAIAATGVPVFAWKGETLEDYWWCTRQILDFGDGQGPNLIVDDGGDATLMIILGYKIENNPSMLQNAGGNAEERALFGQLKAIYEEDSNRWHKVAKEMKGVSEETTTGVHRLYQMMEKGELLFPAINVNDSVTKSKFDNLYGCRESLADGIKRATDVMIAGKVAVVLGYGDVGKGCAHSMRSYGARVIVTEIDPICALQAAMEGFEVTTMDKAVKEGNIFVTTTGNKDVVTLEHMKQMPDEAIVCNIGHFDNEIQVEPLNEYKGATKLNIKPQVDKYTFEDGHCIYLLAEGRLVNLGCATGHPSFVMSNSFTNQTLAQIELWKNDYKVDVYRLPKALDEEVARLHLEQIGVKLTTLSKEQAEYIGVPVTGPYKPEHYRY.

Residues threonine 60, aspartate 135, and glutamate 196 each contribute to the substrate site. 197 to 199 contacts NAD(+); sequence TTT. Lysine 226 and aspartate 230 together coordinate substrate. Residues asparagine 231, 260–265, glutamate 283, asparagine 318, 339–341, and asparagine 387 contribute to the NAD(+) site; these read GYGDVG and IGH.

The protein belongs to the adenosylhomocysteinase family. NAD(+) serves as cofactor.

Its subcellular location is the cytoplasm. It carries out the reaction S-adenosyl-L-homocysteine + H2O = L-homocysteine + adenosine. Its pathway is amino-acid biosynthesis; L-homocysteine biosynthesis; L-homocysteine from S-adenosyl-L-homocysteine: step 1/1. May play a key role in the regulation of the intracellular concentration of adenosylhomocysteine. This is Adenosylhomocysteinase from Chlorobium luteolum (strain DSM 273 / BCRC 81028 / 2530) (Pelodictyon luteolum).